A 660-amino-acid chain; its full sequence is MSGQSLTDRITAAQHSVTGSAVSKTVCKATTHEIMGPKKKHLDYLIQCTNEMNVNIPQLADSLFERTTNSSWVVVFKSLITTHHLMVYGNERFIQYLASRNTLFNLSNFLDKSGLQGYDMSTFIRRYSRYLNEKAVSYRQVAFDFTKVKRGADGVMRTMNTEKLLKTVPIIQNQMDALLDFNVNSNELTNGVINAAFMLLFKDAIRLFAAYNEGIINLLEKYFDMKKNQCKEGLDIYKKFLTRMTRISEFLKVAEQVGIDRGDIPDLSQAPSSLLDALEQHLASLEGKKIKDSTAASRATTLSNAVSSLASTGLSLTKVDEREKQAALEEEQARLKALKEQRLKELAKKPHTSLTTAASPVSTSAGGIMTAPAIDIFSTPSSSNSTSKLPNDLLDLQQPTFHPSVHAMSAAPQGASTWGDPFSATLDAVEDAIPSLNPFLTKSSGDVHLPIASDVSTFTTRTPTHEMFVGFSPSPVAQPHSSAGLNVDFESVFGNKSTNVAVDSGGFDELGGLLKPTVASQNQSLPVAKLPPNKLVSDDLDSSLANLVGNLGIGNGTTKNDVSWSQPGEKKLTGGSNWQPKVAPTTAWSAATMNGMHFPQYAPPVMAYPATTPTGMIGYGIPPQMGSVPVMTQPTLIYSQPVMRPPNPFGPVSGAQIQFM.

Position 2 is an N-acetylserine (S2). Positions 14 to 145 (QHSVTGSAVS…VSYRQVAFDF (132 aa)) constitute an ENTH domain. 2 positions are modified to phosphoserine: S16 and S20. The interval 221-294 (KYFDMKKNQC…LEGKKIKDST (74 aa)) is interaction with PIMREG. K238 participates in a covalent cross-link: Glycyl lysine isopeptide (Lys-Gly) (interchain with G-Cter in SUMO2). S303 and S315 each carry phosphoserine. Polar residues predominate over residues 556–566 (GTTKNDVSWSQ). The interval 556 to 580 (GTTKNDVSWSQPGEKKLTGGSNWQP) is disordered.

Belongs to the PICALM/SNAP91 family. In terms of assembly, binds to clathrin; involves primarily the C-terminal sequences, but the full-length protein is required for full binding capacity. Binds phosphatidylinositol 4,5- bisphosphate. Interacts with PIMREG; this interaction may change the subcellular location into the nucleus. Interacts with AP2A1 (via its alpha-appendage domain). Interacts (via N-terminus) with VAMP2; VAMP3; VAMP7 and VAMP8 (Via N-terminus). Interacts with LC3/MAP1LC3A. Skins and livers of 1-week-old mice.

It localises to the cell membrane. Its subcellular location is the membrane. The protein localises to the clathrin-coated pit. It is found in the golgi apparatus. The protein resides in the cytoplasmic vesicle. It localises to the clathrin-coated vesicle. Its subcellular location is the nucleus. Cytoplasmic adapter protein that plays a critical role in clathrin-mediated endocytosis which is important in processes such as internalization of cell receptors, synaptic transmission or removal of apoptotic cells. Recruits AP-2 and attaches clathrin triskelions to the cytoplasmic side of plasma membrane leading to clathrin-coated vesicles (CCVs) assembly. Furthermore, regulates clathrin-coated vesicle size and maturation by directly sensing and driving membrane curvature. In addition to binding to clathrin, mediates the endocytosis of small R-SNARES (Soluble NSF Attachment Protein REceptors) between plasma membranes and endosomes including VAMP2, VAMP3, VAMP4, VAMP7 or VAMP8. In turn, PICALM-dependent SNARE endocytosis is required for the formation and maturation of autophagic precursors. Modulates thereby autophagy and the turnover of autophagy substrates such as MAPT/TAU or amyloid precursor protein cleaved C-terminal fragment (APP-CTF). This chain is Phosphatidylinositol-binding clathrin assembly protein (Picalm), found in Mus musculus (Mouse).